Consider the following 259-residue polypeptide: Cytosolic Fe-S cluster assembly factor Nubp2 homolog (259 aa).

Residue 14–21 coordinates ATP; sequence GKGGVGKS. Residues cysteine 188 and cysteine 191 each contribute to the [4Fe-4S] cluster site.

Belongs to the Mrp/NBP35 ATP-binding proteins family. NUBP2/CFD1 subfamily. Heterotetramer of 2 Nubp1 and 2 Nubp2 chains. [4Fe-4S] cluster serves as cofactor.

It is found in the cytoplasm. Functionally, component of the cytosolic iron-sulfur (Fe/S) protein assembly (CIA) machinery. Required for maturation of extramitochondrial Fe-S proteins. The Nubp1-Nubp2 heterotetramer forms a Fe-S scaffold complex, mediating the de novo assembly of an Fe-S cluster and its transfer to target apoproteins. This Anopheles gambiae (African malaria mosquito) protein is Cytosolic Fe-S cluster assembly factor Nubp2 homolog.